Reading from the N-terminus, the 152-residue chain is Ribosome maturation factor RimP (152 aa).

Belongs to the RimP family.

The protein localises to the cytoplasm. Functionally, required for maturation of 30S ribosomal subunits. In Paraburkholderia xenovorans (strain LB400), this protein is Ribosome maturation factor RimP.